The following is a 356-amino-acid chain: DNA polymerase IV (356 aa).

A UmuC domain is found at 7–188 (IIHIDMDAFY…IPVTKFYGVG (182 aa)). Residues aspartate 11 and aspartate 106 each contribute to the Mg(2+) site. Glutamate 107 is an active-site residue.

The protein belongs to the DNA polymerase type-Y family. Monomer. The cofactor is Mg(2+).

It localises to the cytoplasm. It carries out the reaction DNA(n) + a 2'-deoxyribonucleoside 5'-triphosphate = DNA(n+1) + diphosphate. Poorly processive, error-prone DNA polymerase involved in untargeted mutagenesis. Copies undamaged DNA at stalled replication forks, which arise in vivo from mismatched or misaligned primer ends. These misaligned primers can be extended by PolIV. Exhibits no 3'-5' exonuclease (proofreading) activity. May be involved in translesional synthesis, in conjunction with the beta clamp from PolIII. The polypeptide is DNA polymerase IV (Listeria welshimeri serovar 6b (strain ATCC 35897 / DSM 20650 / CCUG 15529 / CIP 8149 / NCTC 11857 / SLCC 5334 / V8)).